A 395-amino-acid chain; its full sequence is Elongation factor Tu (395 aa).

The tr-type G domain occupies 10–205 (KPHVNVGTIG…VDNDIPIPPR (196 aa)). The tract at residues 19–26 (GHVDHGKT) is G1. Residue 19–26 (GHVDHGKT) coordinates GTP. Position 26 (threonine 26) interacts with Mg(2+). Residues 60–64 (GITIN) form a G2 region. Residues 81 to 84 (DCPG) are G3. GTP-binding positions include 81–85 (DCPGH) and 136–139 (NKVD). A G4 region spans residues 136 to 139 (NKVD). The interval 174 to 176 (SAL) is G5.

It belongs to the TRAFAC class translation factor GTPase superfamily. Classic translation factor GTPase family. EF-Tu/EF-1A subfamily. Monomer.

Its subcellular location is the cytoplasm. It carries out the reaction GTP + H2O = GDP + phosphate + H(+). GTP hydrolase that promotes the GTP-dependent binding of aminoacyl-tRNA to the A-site of ribosomes during protein biosynthesis. This chain is Elongation factor Tu, found in Cytophaga hutchinsonii (strain ATCC 33406 / DSM 1761 / CIP 103989 / NBRC 15051 / NCIMB 9469 / D465).